We begin with the raw amino-acid sequence, 209 residues long: Auxin-binding protein ABP19a (209 aa).

The signal sequence occupies residues 1–18; the sequence is MIFPIFFTFFLLLSSSHA. An intrachain disulfide couples cysteine 24 to cysteine 39. The Cupin type-1 domain occupies 53–199; the sequence is SGLGIAGNTT…TTFLDAAQIK (147 aa). An N-linked (GlcNAc...) asparagine glycan is attached at asparagine 60. Histidine 101, histidine 103, glutamate 108, and histidine 147 together coordinate Mn(2+).

This sequence belongs to the germin family. In terms of assembly, interacts with ABP20.

It is found in the secreted. It localises to the extracellular space. Its subcellular location is the apoplast. The protein resides in the cell wall. Functionally, probable receptor for the plant growth-promoting hormone auxin. In Prunus persica (Peach), this protein is Auxin-binding protein ABP19a (ABP19A).